Consider the following 148-residue polypeptide: uncharacterized protein (148 aa).

A helical membrane pass occupies residues 1–21 (MLQNYAIVLGMAVAVAIWYFF). Positions 27 to 61 (APPGPNPPKPDPPKPDPPKMHMPKKKPHWMDPHLT) are disordered.

It is found in the host membrane. This is an uncharacterized protein from Frog virus 3 (isolate Goorha) (FV-3).